A 1066-amino-acid chain; its full sequence is Ribosomal protein S6 kinase delta-1 (1066 aa).

The 125-residue stretch at 8-132 folds into the PX domain; sequence SADLARFYTV…DFFKGGIIND (125 aa). The disordered stretch occupies residues 207-228; that stretch reads VASDSEQSKTEEERESRSLFPG. A compositionally biased stretch (basic and acidic residues) spans 212–223; it reads EQSKTEEERESR. Residues 277–305 form the MIT domain; it reads VQGESSPTRREAVKRRTAEYLMRAESISS. A phosphoserine mark is found at Ser-282, Ser-423, Ser-427, Ser-449, and Ser-455. The Protein kinase 1 domain occupies 344 to 445; that stretch reads GVIDKVLLVM…PTLAKVHLQQ (102 aa). The segment at 441 to 509 is disordered; sequence VHLQQPTSSP…SGSSSEEECT (69 aa). Residues 448-458 are compositionally biased toward low complexity; sequence SSPQDSSSFES. Polar residues predominate over residues 474–483; the sequence is SSLTPSSQDD. The segment covering 492–503 has biased composition (low complexity); the sequence is DSSPKWPDSGSS. 10 positions are modified to phosphoserine: Ser-494, Ser-528, Ser-583, Ser-605, Ser-608, Ser-640, Ser-661, Ser-664, Ser-667, and Ser-794. Residues 553 to 596 are disordered; it reads HLAADSDSPSTQLRAHELKFFPNDDPEAVSSPRTSDSLSRSKNS. Over residues 582 to 593 the composition is skewed to low complexity; that stretch reads SSPRTSDSLSRS. The Protein kinase 2 domain maps to 794 to 1056; that stretch reads SSDPKFQGLG…VEDIKSHPFF (263 aa). Residues 801–809 and Arg-820 contribute to the ATP site; that span reads GLGVVESAV. Ser-872 is subject to Phosphoserine. The Proton acceptor role is filled by Asp-929.

This sequence belongs to the protein kinase superfamily. Ser/Thr protein kinase family. S6 kinase subfamily. Interacts with SPHK1 and phosphatidylinositol 3-phosphate. Interacts (via PX domain) with PRDX3. Highly expressed in testis, skeletal muscle, brain, heart, placenta, kidney and liver and weakly expressed in thymus, small intestine, lung and colon.

The protein localises to the cytoplasm. The protein resides in the membrane. It localises to the early endosome. It carries out the reaction L-seryl-[protein] + ATP = O-phospho-L-seryl-[protein] + ADP + H(+). The enzyme catalyses L-threonyl-[protein] + ATP = O-phospho-L-threonyl-[protein] + ADP + H(+). Functionally, may be involved in transmitting sphingosine-1 phosphate (SPP)-mediated signaling into the cell. Plays a role in the recruitment of PRDX3 to early endosomes. This Homo sapiens (Human) protein is Ribosomal protein S6 kinase delta-1 (RPS6KC1).